The following is a 157-amino-acid chain: MAKVESFTLDHTAVKAPYVRLITTEHGAKGDVISNYDLRLVQPNTAAIDTAGLHTIEHLLASLLRDRMDGVIDCSPFGCRTGFHLITWGEHSTTEVAKALKSSLEAIANDITWDDVPGVDIKSCGNYKDHSLFSAKEWAKLILSRGISNDPYTRQVV.

H54, H58, and C124 together coordinate Fe cation.

Belongs to the LuxS family. In terms of assembly, homodimer. Requires Fe cation as cofactor.

It catalyses the reaction S-(5-deoxy-D-ribos-5-yl)-L-homocysteine = (S)-4,5-dihydroxypentane-2,3-dione + L-homocysteine. Its function is as follows. Involved in the synthesis of autoinducer 2 (AI-2) which is secreted by bacteria and is used to communicate both the cell density and the metabolic potential of the environment. The regulation of gene expression in response to changes in cell density is called quorum sensing. Catalyzes the transformation of S-ribosylhomocysteine (RHC) to homocysteine (HC) and 4,5-dihydroxy-2,3-pentadione (DPD). The protein is S-ribosylhomocysteine lyase of Lacticaseibacillus paracasei (strain ATCC 334 / BCRC 17002 / CCUG 31169 / CIP 107868 / KCTC 3260 / NRRL B-441) (Lactobacillus paracasei).